Consider the following 405-residue polypeptide: Imidazolonepropionase (405 aa).

Fe(3+) is bound by residues H72 and H74. Zn(2+) is bound by residues H72 and H74. The 4-imidazolone-5-propanoate site is built by R81, Y144, and H177. Y144 contributes to the N-formimidoyl-L-glutamate binding site. H242 is a binding site for Fe(3+). H242 serves as a coordination point for Zn(2+). Q245 lines the 4-imidazolone-5-propanoate pocket. Residue D317 participates in Fe(3+) binding. D317 is a binding site for Zn(2+). N-formimidoyl-L-glutamate is bound by residues N319 and G321. T322 is a 4-imidazolone-5-propanoate binding site.

This sequence belongs to the metallo-dependent hydrolases superfamily. HutI family. Requires Zn(2+) as cofactor. It depends on Fe(3+) as a cofactor.

Its subcellular location is the cytoplasm. It catalyses the reaction 4-imidazolone-5-propanoate + H2O = N-formimidoyl-L-glutamate. The protein operates within amino-acid degradation; L-histidine degradation into L-glutamate; N-formimidoyl-L-glutamate from L-histidine: step 3/3. Catalyzes the hydrolytic cleavage of the carbon-nitrogen bond in imidazolone-5-propanoate to yield N-formimidoyl-L-glutamate. It is the third step in the universal histidine degradation pathway. In Erwinia tasmaniensis (strain DSM 17950 / CFBP 7177 / CIP 109463 / NCPPB 4357 / Et1/99), this protein is Imidazolonepropionase.